A 367-amino-acid polypeptide reads, in one-letter code: Heme A synthase 2 (367 aa).

Transmembrane regions (helical) follow at residues 28 to 48 (MVAIWLFVSFALIVEMFGIGA), 114 to 134 (MWGRLLGFDFGVPLVWFLWTG), 143 to 163 (WLVTLFVLGGVQGLIGWWMVA), 180 to 200 (VHYCFATLLAIAVFATALTVL), and 221 to 241 (MAMGSIVLISIAIVAGTFLSG). His284 provides a ligand contact to heme. Transmembrane regions (helical) follow at residues 286–306 (LLGTVAAVGVLAAVVAAIRAD), 314–334 (AFLVMGALLIVQYILGVTTLV), and 340–360 (IGIVHQLNAVLLLAAAVWAWF). His344 serves as a coordination point for heme.

It belongs to the COX15/CtaA family. Type 2 subfamily. As to quaternary structure, interacts with CtaB. Requires heme b as cofactor.

It localises to the cell membrane. It catalyses the reaction Fe(II)-heme o + 2 A + H2O = Fe(II)-heme a + 2 AH2. Its pathway is porphyrin-containing compound metabolism; heme A biosynthesis; heme A from heme O: step 1/1. Functionally, catalyzes the conversion of heme O to heme A by two successive hydroxylations of the methyl group at C8. The first hydroxylation forms heme I, the second hydroxylation results in an unstable dihydroxymethyl group, which spontaneously dehydrates, resulting in the formyl group of heme A. The polypeptide is Heme A synthase 2 (Acidiphilium cryptum (strain JF-5)).